We begin with the raw amino-acid sequence, 518 residues long: GMP synthase [glutamine-hydrolyzing] (518 aa).

The Glutamine amidotransferase type-1 domain maps to 6 to 200; the sequence is RLLIIDFGSQ…FVKLAGFKGD (195 aa). Cys84 acts as the Nucleophile in catalysis. Active-site residues include His175 and Glu177. A GMPS ATP-PPase domain is found at 201 to 393; sequence WTMGAYREEA…LGLPDSFIGR (193 aa). 228–234 serves as a coordination point for ATP; that stretch reads SGGVDSS.

In terms of assembly, homodimer.

It carries out the reaction XMP + L-glutamine + ATP + H2O = GMP + L-glutamate + AMP + diphosphate + 2 H(+). The protein operates within purine metabolism; GMP biosynthesis; GMP from XMP (L-Gln route): step 1/1. Catalyzes the synthesis of GMP from XMP. In Cereibacter sphaeroides (strain ATCC 17025 / ATH 2.4.3) (Rhodobacter sphaeroides), this protein is GMP synthase [glutamine-hydrolyzing].